A 192-amino-acid polypeptide reads, in one-letter code: Nucleosome assembly protein 1-like 5 (192 aa).

Residues 1–12 are compositionally biased toward polar residues; it reads MADSQNQGSAEP. The tract at residues 1 to 76 is disordered; it reads MADSQNQGSA…APKPRNDFIE (76 aa). Composition is skewed to low complexity over residues 15–28 and 40–55; these read AAAA…AAAA and GDSD…VVGQ. A coiled-coil region spans residues 86–112; it reads VLALKKLQKRCDKIEAKFDKEFQALEK. Residues 136–192 are disordered; sequence AWTLEGDEEDDDDDEYEDEEEGEEEDEEEEEPAAEAAGTAAAKDEGPHSAVPDDAKK. Residues 140–168 are compositionally biased toward acidic residues; the sequence is EGDEEDDDDDEYEDEEEGEEEDEEEEEPA. Residues 177 to 192 are compositionally biased toward basic and acidic residues; sequence AKDEGPHSAVPDDAKK.

The protein belongs to the nucleosome assembly protein (NAP) family.

The protein localises to the nucleus. The protein is Nucleosome assembly protein 1-like 5 (NAP1L5) of Bos taurus (Bovine).